Here is a 522-residue protein sequence, read N- to C-terminus: Subtilisin-like protease 10 (522 aa).

The first 19 residues, 1 to 19 (MFFFKGVVAVLSFFSAVNA), serve as a signal peptide directing secretion. Residues 20 to 117 (APFMKPNNGT…VERDQIGTSQ (98 aa)) constitute a propeptide that is removed on maturation. Residues 36 to 113 (SYIVLLKRDI…HVAHVERDQI (78 aa)) enclose the Inhibitor I9 domain. The Peptidase S8 domain maps to 127–405 (NWGLGRLSNS…KLLVNGANGT (279 aa)). Residues Asp-159 and His-190 each act as charge relay system in the active site. A glycan (N-linked (GlcNAc...) asparagine) is linked at Asn-251. Residue Ser-348 is the Charge relay system of the active site. Over residues 383-397 (SASVKNPGPNTTNKL) the composition is skewed to polar residues. The segment at 383–515 (SASVKNPGPN…GWNRPMWWNR (133 aa)) is disordered. N-linked (GlcNAc...) asparagine glycans are attached at residues Asn-392 and Asn-403. Residues 432–459 (SQNPPPGQNPPPGQNPPPEQPAPSPPAN) are compositionally biased toward pro residues.

Belongs to the peptidase S8 family.

The protein resides in the secreted. Its function is as follows. Secreted subtilisin-like serine protease with keratinolytic activity that contributes to pathogenicity. This is Subtilisin-like protease 10 (SUB10) from Trichophyton verrucosum (strain HKI 0517).